Reading from the N-terminus, the 268-residue chain is L-aspartate dehydrogenase (268 aa).

Residues Ala-125 and Asn-191 each coordinate NAD(+). His-221 is a catalytic residue.

The protein belongs to the L-aspartate dehydrogenase family.

It catalyses the reaction L-aspartate + NADP(+) + H2O = oxaloacetate + NH4(+) + NADPH + H(+). The catalysed reaction is L-aspartate + NAD(+) + H2O = oxaloacetate + NH4(+) + NADH + H(+). It participates in cofactor biosynthesis; NAD(+) biosynthesis; iminoaspartate from L-aspartate (dehydrogenase route): step 1/1. Functionally, specifically catalyzes the NAD or NADP-dependent dehydrogenation of L-aspartate to iminoaspartate. The protein is L-aspartate dehydrogenase of Ralstonia nicotianae (strain ATCC BAA-1114 / GMI1000) (Ralstonia solanacearum).